Reading from the N-terminus, the 368-residue chain is Dihydroorotate dehydrogenase (quinone) (368 aa).

FMN is bound by residues 67-71 (AGFDK) and T91. K71 is a binding site for substrate. 116 to 120 (NRMGF) provides a ligand contact to substrate. FMN contacts are provided by N146 and N179. A substrate-binding site is contributed by N179. S182 functions as the Nucleophile in the catalytic mechanism. N184 is a binding site for substrate. K222 and T250 together coordinate FMN. Substrate is bound at residue 251–252 (NT). FMN contacts are provided by residues G276, G305, and 326-327 (YS).

It belongs to the dihydroorotate dehydrogenase family. Type 2 subfamily. As to quaternary structure, monomer. It depends on FMN as a cofactor.

It is found in the cell membrane. It carries out the reaction (S)-dihydroorotate + a quinone = orotate + a quinol. The protein operates within pyrimidine metabolism; UMP biosynthesis via de novo pathway; orotate from (S)-dihydroorotate (quinone route): step 1/1. Catalyzes the conversion of dihydroorotate to orotate with quinone as electron acceptor. This chain is Dihydroorotate dehydrogenase (quinone), found in Streptomyces coelicolor (strain ATCC BAA-471 / A3(2) / M145).